A 191-amino-acid chain; its full sequence is dTTP/UTP pyrophosphatase (191 aa).

The Proton acceptor role is filled by aspartate 64.

It belongs to the Maf family. YhdE subfamily. A divalent metal cation is required as a cofactor.

The protein resides in the cytoplasm. The enzyme catalyses dTTP + H2O = dTMP + diphosphate + H(+). The catalysed reaction is UTP + H2O = UMP + diphosphate + H(+). Functionally, nucleoside triphosphate pyrophosphatase that hydrolyzes dTTP and UTP. May have a dual role in cell division arrest and in preventing the incorporation of modified nucleotides into cellular nucleic acids. The chain is dTTP/UTP pyrophosphatase from Thermosipho africanus (strain TCF52B).